Consider the following 138-residue polypeptide: Large ribosomal subunit protein uL16 (138 aa).

Over residues 1 to 18 the composition is skewed to basic residues; it reads MALMPKRVKHRKSQRGRI. The segment at 1–21 is disordered; it reads MALMPKRVKHRKSQRGRIKGN.

Belongs to the universal ribosomal protein uL16 family. Part of the 50S ribosomal subunit.

In terms of biological role, binds 23S rRNA and is also seen to make contacts with the A and possibly P site tRNAs. This chain is Large ribosomal subunit protein uL16, found in Rhodopirellula baltica (strain DSM 10527 / NCIMB 13988 / SH1).